A 436-amino-acid polypeptide reads, in one-letter code: Trigger factor (436 aa).

Residues 163-248 form the PPIase FKBP-type domain; the sequence is GDRVTVDFEG…VKKIEAAHLP (86 aa).

The protein belongs to the FKBP-type PPIase family. Tig subfamily.

It is found in the cytoplasm. The enzyme catalyses [protein]-peptidylproline (omega=180) = [protein]-peptidylproline (omega=0). Functionally, involved in protein export. Acts as a chaperone by maintaining the newly synthesized protein in an open conformation. Functions as a peptidyl-prolyl cis-trans isomerase. In Paracidovorax citrulli (strain AAC00-1) (Acidovorax citrulli), this protein is Trigger factor.